Consider the following 65-residue polypeptide: MNIEQFRAKSVDDLKAHLIELRKEQFSMRMQLAMGQFQKTHEIRRVRRNIARVKYVLSWINRASA.

This sequence belongs to the universal ribosomal protein uL29 family.

The protein is Large ribosomal subunit protein uL29 (rpmC) of Xylella fastidiosa (strain 9a5c).